Reading from the N-terminus, the 201-residue chain is Glycerol-3-phosphate acyltransferase (201 aa).

Helical transmembrane passes span 5–25 (LLGAVLVAAGYLAGSIPFGVV), 55–75 (KMGVLVLVLDAAKAIVPILLA), 88–108 (WSTAVAVAAFVGHLFPVWLGF), 118–138 (LGIFAVLAPWAALAGLVGYAV), and 164–184 (TYGVRHPVPWAGLAIALLIFL).

It belongs to the PlsY family. In terms of assembly, probably interacts with PlsX.

The protein resides in the cell inner membrane. The catalysed reaction is an acyl phosphate + sn-glycerol 3-phosphate = a 1-acyl-sn-glycero-3-phosphate + phosphate. It functions in the pathway lipid metabolism; phospholipid metabolism. In terms of biological role, catalyzes the transfer of an acyl group from acyl-phosphate (acyl-PO(4)) to glycerol-3-phosphate (G3P) to form lysophosphatidic acid (LPA). This enzyme utilizes acyl-phosphate as fatty acyl donor, but not acyl-CoA or acyl-ACP. The polypeptide is Glycerol-3-phosphate acyltransferase (Anaeromyxobacter dehalogenans (strain 2CP-C)).